A 770-amino-acid polypeptide reads, in one-letter code: Protein PAT1 homolog 1 (770 aa).

Positions 1–26 (MFRYESLEDCPLDEDEDAFQGLGEED) are disordered. Residues 1–84 (MFRYESLEDC…EMDLLGDHEE (84 aa)) form a region A; interaction with DDX6/RCK region. The tract at residues 1 to 397 (MFRYESLEDC…HRSSHQDHLR (397 aa)) is involved in nuclear foci localization. A compositionally biased stretch (acidic residues) spans 7-26 (LEDCPLDEDEDAFQGLGEED). A region N; interaction with decapping machinery region spans residues 85–388 (NLAERLSKMV…LNGAGDRGSH (304 aa)). Residues 86 to 95 (LAERLSKMVI) carry the Nuclear export signal motif. Position 177 is a phosphoserine (Ser-177). A Phosphothreonine modification is found at Thr-178. Phosphoserine is present on residues Ser-179 and Ser-184. Thr-194 carries the phosphothreonine modification. 3 positions are modified to asymmetric dimethylarginine: Arg-217, Arg-223, and Arg-263. An involved in RNA-binding region spans residues 223–397 (RYPAPYGERM…HRSSHQDHLR (175 aa)). Ser-278 carries the post-translational modification Phosphoserine. Arg-284 is modified (asymmetric dimethylarginine). A compositionally biased stretch (low complexity) spans 314-323 (GFRAFFSAPP). Disordered stretches follow at residues 314 to 344 (GFRA…QNLR) and 360 to 399 (QHRR…LRKD). A compositionally biased stretch (pro residues) spans 324-337 (SATPPPQQHPPGPG). The segment covering 367–380 (QRQQQNRSQHRNLN) has biased composition (low complexity). Arg-385 bears the Omega-N-methylarginine mark. Over residues 385 to 399 (RGSHRSSHQDHLRKD) the composition is skewed to basic and acidic residues. The region H stretch occupies residues 389–448 (RSSHQDHLRKDPYANLMLQREKDWVSKIQMMQLQSTDPYLDDFYYQNYFEKLEKLSAAEE). Positions 398–770 (KDPYANLMLQ…TKLQLVQGIR (373 aa)) are involved in nuclear speckle localization. The region C stretch occupies residues 449–770 (IQGDGPKKER…TKLQLVQGIR (322 aa)).

It belongs to the PAT1 family. Interacts (via region A) with DDX6/RCK. Interacts (via region H and region C) with LSM1 and LSM4. Interacts (via region N) with DCP1A, DCP2, EDC3, EDC4 and XRN1. Interacts with the CCR4-NOT complex. Interacts with the Lsm-containing SMN-Sm protein complex. Interacts with EIF4ENIF1/4E-T. As to expression, ubiquitous.

The protein resides in the cytoplasm. Its subcellular location is the P-body. It is found in the nucleus. It localises to the PML body. The protein localises to the nucleus speckle. Functionally, RNA-binding protein involved in deadenylation-dependent decapping of mRNAs, leading to the degradation of mRNAs. Acts as a scaffold protein that connects deadenylation and decapping machinery. Required for cytoplasmic mRNA processing body (P-body) assembly. In terms of biological role, (Microbial infection) In case of infection, required for translation and replication of hepatitis C virus (HCV). This Homo sapiens (Human) protein is Protein PAT1 homolog 1 (PATL1).